Here is a 260-residue protein sequence, read N- to C-terminus: Cytosolic Fe-S cluster assembly factor Nubp2 homolog (260 aa).

14 to 21 (GKGGVGKS) provides a ligand contact to ATP. [4Fe-4S] cluster is bound by residues cysteine 188 and cysteine 191.

Belongs to the Mrp/NBP35 ATP-binding proteins family. NUBP2/CFD1 subfamily. Heterotetramer of 2 Nubp1 and 2 Nubp2 chains. [4Fe-4S] cluster serves as cofactor.

It localises to the cytoplasm. Functionally, component of the cytosolic iron-sulfur (Fe/S) protein assembly (CIA) machinery. Required for maturation of extramitochondrial Fe-S proteins. The Nubp1-Nubp2 heterotetramer forms a Fe-S scaffold complex, mediating the de novo assembly of an Fe-S cluster and its transfer to target apoproteins. The sequence is that of Cytosolic Fe-S cluster assembly factor Nubp2 homolog from Drosophila melanogaster (Fruit fly).